Consider the following 455-residue polypeptide: Serine--tRNA ligase (455 aa).

L-serine is bound at residue 252 to 254 (TAE). Residues 283–285 (RKE) and V299 each bind ATP. E306 is a binding site for L-serine. 370-373 (EVVS) lines the ATP pocket. T406 contacts L-serine.

The protein belongs to the class-II aminoacyl-tRNA synthetase family. Type-1 seryl-tRNA synthetase subfamily. Homodimer. The tRNA molecule binds across the dimer.

The protein localises to the cytoplasm. The enzyme catalyses tRNA(Ser) + L-serine + ATP = L-seryl-tRNA(Ser) + AMP + diphosphate + H(+). The catalysed reaction is tRNA(Sec) + L-serine + ATP = L-seryl-tRNA(Sec) + AMP + diphosphate + H(+). Its pathway is aminoacyl-tRNA biosynthesis; selenocysteinyl-tRNA(Sec) biosynthesis; L-seryl-tRNA(Sec) from L-serine and tRNA(Sec): step 1/1. Its function is as follows. Catalyzes the attachment of serine to tRNA(Ser). Is also able to aminoacylate tRNA(Sec) with serine, to form the misacylated tRNA L-seryl-tRNA(Sec), which will be further converted into selenocysteinyl-tRNA(Sec). The protein is Serine--tRNA ligase of Thermococcus gammatolerans (strain DSM 15229 / JCM 11827 / EJ3).